The chain runs to 550 residues: Chaperonin GroEL (550 aa).

ATP-binding positions include 30–33 (TLGP), Lys-51, 87–91 (DGTTT), Gly-415, 481–483 (NAA), and Asp-497.

Belongs to the chaperonin (HSP60) family. As to quaternary structure, forms a cylinder of 14 subunits composed of two heptameric rings stacked back-to-back. Interacts with the co-chaperonin GroES.

The protein localises to the cytoplasm. It carries out the reaction ATP + H2O + a folded polypeptide = ADP + phosphate + an unfolded polypeptide.. In terms of biological role, together with its co-chaperonin GroES, plays an essential role in assisting protein folding. The GroEL-GroES system forms a nano-cage that allows encapsulation of the non-native substrate proteins and provides a physical environment optimized to promote and accelerate protein folding. This chain is Chaperonin GroEL, found in Photobacterium profundum (strain SS9).